Consider the following 463-residue polypeptide: Quinolone resistance protein NorB (463 aa).

14 helical membrane passes run 17–37 (IGIV…VNVV), 53–73 (IAVS…GGLA), 86–106 (IILN…LLLI), 107–127 (IGRL…LSII), 142–162 (YWSI…GAVA), 165–185 (LGWR…LFLI), 201–221 (FDIK…ILIT), 230–250 (SLLF…FIVL), 273–293 (TASN…NTFV), 299–319 (YSSL…LIMI), 334–354 (PMLI…LTFL), 357–377 (ILYV…LGIY), 403–423 (MASA…YAIV), and 435–455 (IALW…LLLV).

This sequence belongs to the major facilitator superfamily. TCR/Tet family.

Its subcellular location is the cell membrane. Its function is as follows. Multidrug efflux pump that acts independently of NorA and is one of the factors that confers resistance against diverse quinolones and chemical compounds. This Staphylococcus aureus (strain MSSA476) protein is Quinolone resistance protein NorB (norB).